The following is a 366-amino-acid chain: Quinolinate synthase (366 aa).

2 residues coordinate iminosuccinate: His44 and Ser61. Position 108 (Cys108) interacts with [4Fe-4S] cluster. Residues 139 to 141 (YIN) and Ser160 contribute to the iminosuccinate site. Residue Cys228 coordinates [4Fe-4S] cluster. Iminosuccinate-binding positions include 254–256 (HPE) and Thr271. Residue Cys318 coordinates [4Fe-4S] cluster.

Belongs to the quinolinate synthase family. Type 3 subfamily. [4Fe-4S] cluster serves as cofactor.

It localises to the cytoplasm. The catalysed reaction is iminosuccinate + dihydroxyacetone phosphate = quinolinate + phosphate + 2 H2O + H(+). Its pathway is cofactor biosynthesis; NAD(+) biosynthesis; quinolinate from iminoaspartate: step 1/1. Functionally, catalyzes the condensation of iminoaspartate with dihydroxyacetone phosphate to form quinolinate. This is Quinolinate synthase from Listeria monocytogenes serotype 4b (strain F2365).